The chain runs to 279 residues: Large ribosomal subunit protein uL2 (279 aa).

2 disordered regions span residues 34–55 and 221–279; these read LAPL…RHKG and RGMA…RKAK. A compositionally biased stretch (basic residues) spans 40-55; the sequence is SGGRNRAGRITSRHKG. A compositionally biased stretch (gly residues) spans 232–242; the sequence is MGGGEGRSKSG. Basic residues predominate over residues 259 to 279; the sequence is LKTRNKKKASSKLIVRGRKAK.

This sequence belongs to the universal ribosomal protein uL2 family. In terms of assembly, part of the 50S ribosomal subunit. Forms a bridge to the 30S subunit in the 70S ribosome.

Its function is as follows. One of the primary rRNA binding proteins. Required for association of the 30S and 50S subunits to form the 70S ribosome, for tRNA binding and peptide bond formation. It has been suggested to have peptidyltransferase activity; this is somewhat controversial. Makes several contacts with the 16S rRNA in the 70S ribosome. The chain is Large ribosomal subunit protein uL2 from Chlorobium phaeobacteroides (strain BS1).